Consider the following 216-residue polypeptide: Pyrophosphatase PpaX (216 aa).

Catalysis depends on D12, which acts as the Nucleophile.

The protein belongs to the HAD-like hydrolase superfamily. PpaX family. Requires Mg(2+) as cofactor.

The enzyme catalyses diphosphate + H2O = 2 phosphate + H(+). Its function is as follows. Hydrolyzes pyrophosphate formed during P-Ser-HPr dephosphorylation by HPrK/P. Might play a role in controlling the intracellular pyrophosphate pool. The sequence is that of Pyrophosphatase PpaX from Bacillus velezensis (strain DSM 23117 / BGSC 10A6 / LMG 26770 / FZB42) (Bacillus amyloliquefaciens subsp. plantarum).